The sequence spans 572 residues: MTLAITSRLRRNFVFRRRNLESLLSPQCQKLINDLRSCRDTVEVSRIHGYMVKTGLDKDDFAVSKLLAFSSVLDIRYASSIFEHVSNTNLFMFNTMIRGYSISDEPERAFSVFNQLRAKGLTLDRFSFITTLKSCSRELCVSIGEGLHGIALRSGFMVFTDLRNALIHFYCVCGKISDARKVFDEMPQSVDAVTFSTLMNGYLQVSKKALALDLFRIMRKSEVVVNVSTLLSFLSAISDLGDLSGAESAHVLCIKIGLDLDLHLITALIGMYGKTGGISSARRIFDCAIRKDVVTWNCMIDQYAKTGLLEECVWLLRQMKYEKMKPNSSTFVGLLSSCAYSEAAFVGRTVADLLEEERIALDAILGTALVDMYAKVGLLEKAVEIFNRMKDKDVKSWTAMISGYGAHGLAREAVTLFNKMEEENCKVRPNEITFLVVLNACSHGGLVMEGIRCFKRMVEAYSFTPKVEHYGCVVDLLGRAGQLEEAYELIRNLPITSDSTAWRALLAACRVYGNADLGESVMMRLAEMGETHPADAILLAGTHAVAGNPEKSLDNELNKGRKEAGYSAIEIE.

The N-terminal 117 residues, 1–117, are a transit peptide targeting the mitochondrion; sequence MTLAITSRLR…RAFSVFNQLR (117 aa). PPR repeat units lie at residues 89–123, 124–158, 159–189, 191–225, 226–260, 261–291, 292–326, 327–361, 362–392, 393–427, 430–460, and 466–496; these read NLFMFNTMIRGYSISDEPERAFSVFNQLRAKGLTL, DRFSFITTLKSCSRELCVSIGEGLHGIALRSGFMV, FTDLRNALIHFYCVCGKISDARKVFDEMPQS, DAVTFSTLMNGYLQVSKKALALDLFRIMRKSEVVV, NVSTLLSFLSAISDLGDLSGAESAHVLCIKIGLDL, DLHLITALIGMYGKTGGISSARRIFDCAIRK, DVVTWNCMIDQYAKTGLLEECVWLLRQMKYEKMKP, NSSTFVGLLSSCAYSEAAFVGRTVADLLEEERIAL, DAILGTALVDMYAKVGLLEKAVEIFNRMKDK, DVKSWTAMISGYGAHGLAREAVTLFNKMEEENCKV, NEITFLVVLNACSHGGLVMEGIRCFKRMVEA, and KVEHYGCVVDLLGRAGQLEEAYELIRNLPIT. Residues 501–572 are type E motif; that stretch reads AWRALLAACR…EAGYSAIEIE (72 aa).

Belongs to the PPR family. PCMP-E subfamily.

The protein localises to the mitochondrion. The polypeptide is Pentatricopeptide repeat-containing protein At1g26900, mitochondrial (PCMP-E54) (Arabidopsis thaliana (Mouse-ear cress)).